The sequence spans 445 residues: Phosphoglucosamine mutase (445 aa).

The active-site Phosphoserine intermediate is the Ser99. The Mg(2+) site is built by Ser99, Asp242, Asp244, and Asp246. At Ser99 the chain carries Phosphoserine.

It belongs to the phosphohexose mutase family. Mg(2+) is required as a cofactor. Activated by phosphorylation.

The catalysed reaction is alpha-D-glucosamine 1-phosphate = D-glucosamine 6-phosphate. Functionally, catalyzes the conversion of glucosamine-6-phosphate to glucosamine-1-phosphate. The sequence is that of Phosphoglucosamine mutase from Campylobacter jejuni subsp. jejuni serotype O:6 (strain 81116 / NCTC 11828).